The sequence spans 435 residues: GTPase Obg (435 aa).

The Obg domain occupies 6–164; it reads ADFVDRVKIF…RWLELELKIL (159 aa). The OBG-type G domain occupies 165–335; it reads ADVGLVGYPN…LVSKLASIVR (171 aa). GTP contacts are provided by residues 171 to 178, 196 to 200, 217 to 220, 287 to 290, and 316 to 318; these read GYPNVGKS, FTTLI, DIPG, NKID, and SAV. 2 residues coordinate Mg(2+): serine 178 and threonine 198. An OCT domain is found at 357–435; the sequence is RRLPEKFHLE…IGDFEFEYRE (79 aa).

It belongs to the TRAFAC class OBG-HflX-like GTPase superfamily. OBG GTPase family. Monomer. Mg(2+) is required as a cofactor.

It localises to the cytoplasm. Its function is as follows. An essential GTPase which binds GTP, GDP and possibly (p)ppGpp with moderate affinity, with high nucleotide exchange rates and a fairly low GTP hydrolysis rate. Plays a role in control of the cell cycle, stress response, ribosome biogenesis and in those bacteria that undergo differentiation, in morphogenesis control. In Thermotoga maritima (strain ATCC 43589 / DSM 3109 / JCM 10099 / NBRC 100826 / MSB8), this protein is GTPase Obg.